Reading from the N-terminus, the 1099-residue chain is ATP-dependent helicase/deoxyribonuclease subunit B (1099 aa).

[4Fe-4S] cluster-binding residues include cysteine 766, cysteine 1056, cysteine 1059, and cysteine 1065.

This sequence belongs to the helicase family. AddB/RexB type 2 subfamily. In terms of assembly, heterodimer of AddA and RexB. Mg(2+) serves as cofactor. Requires [4Fe-4S] cluster as cofactor.

In terms of biological role, the heterodimer acts as both an ATP-dependent DNA helicase and an ATP-dependent, dual-direction single-stranded exonuclease. Recognizes the chi site generating a DNA molecule suitable for the initiation of homologous recombination. This subunit has 5' -&gt; 3' nuclease activity but not helicase activity. The sequence is that of ATP-dependent helicase/deoxyribonuclease subunit B from Lactococcus lactis subsp. lactis (strain IL1403) (Streptococcus lactis).